Consider the following 474-residue polypeptide: Gamma-aminobutyric acid receptor subunit beta-1 (474 aa).

Positions 1 to 25 (MWTVQNRESLGLLSFPVMIAMVCCA) are cleaved as a signal peptide. At 26 to 245 (HSANEPSNMS…SFRLKRNIGY (220 aa)) the chain is on the extracellular side. Residues N33 and N105 are each glycosylated (N-linked (GlcNAc...) asparagine). Y122 contributes to the histamine binding site. Residues C161 and C175 are joined by a disulfide bond. A glycan (N-linked (GlcNAc...) asparagine) is linked at N174. Residues 181-182 (SY) and T227 contribute to the histamine site. The 4-aminobutanoate site is built by Y182 and T227. Helical transmembrane passes span 246–267 (FILQTYMPSTLITILSWVSFWI), 271–293 (ASAARVALGITTVLTMTTISTHL), and 305–327 (AIDIYLMGCFVFVFLALLEYAFV). Topologically, residues 328–451 (NYIFFGKGPQ…DLTDVNSIDK (124 aa)) are cytoplasmic. Residues 452 to 473 (WSRMFFPITFSLFNVVYWLYYV) form a helical membrane-spanning segment.

This sequence belongs to the ligand-gated ion channel (TC 1.A.9) family. Gamma-aminobutyric acid receptor (TC 1.A.9.5) subfamily. GABRB1 sub-subfamily. Heteropentamer, formed by a combination of alpha (GABRA1-6), beta (GABRB1-3), gamma (GABRG1-3), delta (GABRD), epsilon (GABRE), rho (GABRR1-3), pi (GABRP) and theta (GABRQ) chains, each subunit exhibiting distinct physiological and pharmacological properties. Binds UBQLN1.

Its subcellular location is the postsynaptic cell membrane. The protein resides in the cell membrane. The catalysed reaction is chloride(in) = chloride(out). With respect to regulation, potentiated by histamine. Beta subunit of the heteropentameric ligand-gated chloride channel gated by gamma-aminobutyric acid (GABA), a major inhibitory neurotransmitter in the brain. GABA-gated chloride channels, also named GABA(A) receptors (GABAAR), consist of five subunits arranged around a central pore and contain GABA active binding site(s) located at the alpha and beta subunit interface(s). When activated by GABA, GABAARs selectively allow the flow of chloride anions across the cell membrane down their electrochemical gradient. Chloride influx into the postsynaptic neuron following GABAAR opening decreases the neuron ability to generate a new action potential, thereby reducing nerve transmission. Beta-containing GABAARs can simultaneously bind GABA and histamine where histamine binds at the interface of two neighboring beta subunits, which may be involved in the regulation of sleep and wakefulness. This is Gamma-aminobutyric acid receptor subunit beta-1 (GABRB1) from Bos taurus (Bovine).